We begin with the raw amino-acid sequence, 441 residues long: Arginine biosynthesis bifunctional protein ArgJ, mitochondrial (441 aa).

Residues T178, K204, T215, E304, N436, and S441 each coordinate substrate. T215 acts as the Nucleophile in catalysis.

The protein belongs to the ArgJ family. In terms of assembly, heterodimer of an alpha and a beta chain. In terms of processing, the alpha and beta chains are autoproteolytically processed from a single precursor protein within the mitochondrion.

The protein resides in the mitochondrion matrix. The catalysed reaction is N(2)-acetyl-L-ornithine + L-glutamate = N-acetyl-L-glutamate + L-ornithine. It carries out the reaction L-glutamate + acetyl-CoA = N-acetyl-L-glutamate + CoA + H(+). The protein operates within amino-acid biosynthesis; L-arginine biosynthesis; L-ornithine and N-acetyl-L-glutamate from L-glutamate and N(2)-acetyl-L-ornithine (cyclic): step 1/1. Its pathway is amino-acid biosynthesis; L-arginine biosynthesis; N(2)-acetyl-L-ornithine from L-glutamate: step 1/4. Its function is as follows. Catalyzes two activities which are involved in the cyclic version of arginine biosynthesis: the synthesis of acetylglutamate from glutamate and acetyl-CoA, and of ornithine by transacetylation between acetylornithine and glutamate. The polypeptide is Arginine biosynthesis bifunctional protein ArgJ, mitochondrial (Lodderomyces elongisporus (strain ATCC 11503 / CBS 2605 / JCM 1781 / NBRC 1676 / NRRL YB-4239) (Yeast)).